We begin with the raw amino-acid sequence, 397 residues long: Lysophospholipid transporter LplT (397 aa).

At 1–17 (MSESVHTNTSLWSKGMK) the chain is on the periplasmic side. A helical membrane pass occupies residues 18 to 38 (AVIVAQFLSAFGDNALLFATL). Over 39 to 52 (ALLKAQFYPEWSQP) the chain is Cytoplasmic. Residues 53–73 (ILQMVFVGAYILFAPFVGQVA) form a helical membrane-spanning segment. Residues 74–90 (DSFAKGRVMMFANGLKL) are Periplasmic-facing. Residues 91–111 (LGAASICFGINPFLGYTLVGV) traverse the membrane as a helical segment. The Cytoplasmic segment spans residues 112-144 (GAAAYSPAKYGILGELTTGSKLVKANGLMEAST). The chain crosses the membrane as a helical span at residues 145-165 (IAAILLGSVAGGVLADWHILV). A topological domain (periplasmic) is located at residue alanine 166. Residues 167-187 (LAACALAYGGAVVANIYIPKL) traverse the membrane as a helical segment. Topologically, residues 188–226 (AAARPGQSWNLISMTRSFLNACTSLWRNGETRFSLVGTS) are cytoplasmic. Residues 227 to 247 (LFWGAGVTLRFLLVLWVPVAL) traverse the membrane as a helical segment. At 248 to 256 (GITDNATPT) the chain is on the periplasmic side. The chain crosses the membrane as a helical span at residues 257–277 (YLNAMVAIGIVVGAGAAAKLV). The Cytoplasmic segment spans residues 278-280 (TLE). A helical transmembrane segment spans residues 281-301 (TVSRCMPAGILIGVVVLIFSL). The Periplasmic portion of the chain corresponds to 302–304 (QHE). The chain crosses the membrane as a helical span at residues 305-325 (LLPAYALLMLIGVLGGFFVVP). Residues 326–343 (LNALLQERGKKSVGAGNA) lie on the Cytoplasmic side of the membrane. The helical transmembrane segment at 344–364 (IAVQNLGENSAMLLMLGIYSL) threads the bilayer. At 365–366 (AV) the chain is on the periplasmic side. The chain crosses the membrane as a helical span at residues 367 to 387 (MVGIPVVPIGIGFGALFALAI). The Cytoplasmic segment spans residues 388 to 397 (TALWIWQRRH).

It belongs to the major facilitator superfamily. LplT (TC 2.A.1.42) family.

Its subcellular location is the cell inner membrane. Its function is as follows. Catalyzes the facilitated diffusion of 2-acyl-glycero-3-phosphoethanolamine (2-acyl-GPE) into the cell. In Escherichia coli O6:K15:H31 (strain 536 / UPEC), this protein is Lysophospholipid transporter LplT.